We begin with the raw amino-acid sequence, 324 residues long: Corticotropin-releasing factor-binding protein (324 aa).

Positions 1–23 (MAPTLKLQCHFILVCLLALRGES) are cleaved as a signal peptide. Disulfide bonds link Cys-62–Cys-83, Cys-106–Cys-143, Cys-185–Cys-207, Cys-239–Cys-266, and Cys-279–Cys-320. N-linked (GlcNAc...) asparagine glycosylation occurs at Asn-206.

The protein belongs to the CRF-binding protein family.

It localises to the secreted. Binds CRF and inactivates it. May prevent inappropriate pituitary-adrenal stimulation in pregnancy. This is Corticotropin-releasing factor-binding protein (CRHBP) from Ovis aries (Sheep).